A 517-amino-acid polypeptide reads, in one-letter code: Amidophosphoribosyltransferase (517 aa).

M1 carries the post-translational modification N-acetylmethionine. A propeptide spanning residues 1 to 11 (MELEELGIREE) is cleaved from the precursor. Catalysis depends on C12, which acts as the Nucleophile. The region spanning 12–261 (CGVFGCIASG…PGEIVEISRH (250 aa)) is the Glutamine amidotransferase type-2 domain. Residue C280 participates in [4Fe-4S] cluster binding. Positions 327, 389, and 390 each coordinate Mg(2+). Residues C426, C503, and C506 each coordinate [4Fe-4S] cluster.

This sequence in the C-terminal section; belongs to the purine/pyrimidine phosphoribosyltransferase family. As to quaternary structure, homotetramer. Requires Mg(2+) as cofactor. The cofactor is [4Fe-4S] cluster. As to expression, ubiquitously expressed.

The enzyme catalyses 5-phospho-beta-D-ribosylamine + L-glutamate + diphosphate = 5-phospho-alpha-D-ribose 1-diphosphate + L-glutamine + H2O. Its pathway is purine metabolism; IMP biosynthesis via de novo pathway; N(1)-(5-phospho-D-ribosyl)glycinamide from 5-phospho-alpha-D-ribose 1-diphosphate: step 1/2. Its function is as follows. Catalyzes the formation of phosphoribosylamine from phosphoribosylpyrophosphate (PRPP) and glutamine. The sequence is that of Amidophosphoribosyltransferase (PPAT) from Homo sapiens (Human).